A 119-amino-acid chain; its full sequence is Acidic phospholipase A2 CM-II (119 aa).

Tyr-25, Gly-27, and Gly-29 together coordinate Ca(2+). His-45 is a catalytic residue. Position 46 (Asp-46) interacts with Ca(2+). Residue Asp-87 is part of the active site.

It belongs to the phospholipase A2 family. Group II subfamily. D49 sub-subfamily. Ca(2+) is required as a cofactor. Contains 6 disulfide bonds. As to expression, expressed by the venom gland.

It localises to the secreted. It catalyses the reaction a 1,2-diacyl-sn-glycero-3-phosphocholine + H2O = a 1-acyl-sn-glycero-3-phosphocholine + a fatty acid + H(+). In terms of biological role, PLA2 catalyzes the calcium-dependent hydrolysis of the 2-acyl groups in 3-sn-phosphoglycerides. This is Acidic phospholipase A2 CM-II from Bitis nasicornis (Rhinoceros adder).